A 614-amino-acid chain; its full sequence is Pheromone-processing carboxypeptidase KEX1 (614 aa).

Positions 1 to 17 (MKLSWSLFCGLASLALS) are cleaved as a signal peptide. The Lumenal portion of the chain corresponds to 18–518 (QFDEAPPSQS…SDAMWKAYYQ (501 aa)). The N-linked (GlcNAc...) asparagine glycan is linked to N42. Residues S177 and D379 contribute to the active site. N-linked (GlcNAc...) asparagine glycans are attached at residues N426 and N434. H437 is an active-site residue. Residues 465-503 (SGNKPGRGSENPSDLDDQKSGDQKSDDDSSSDDDDDAEH) are disordered. The span at 480–491 (DDQKSGDQKSDD) shows a compositional bias: basic and acidic residues. Residues 492–501 (DSSSDDDDDA) are compositionally biased toward acidic residues. A helical transmembrane segment spans residues 519-539 (AGFTALIVVLIILGLAGFLFW). The Cytoplasmic segment spans residues 540–614 (RKNRGHIYQE…EELVIRRPEV (75 aa)).

Belongs to the peptidase S10 family.

Its subcellular location is the golgi apparatus. It is found in the trans-Golgi network membrane. It carries out the reaction Preferential release of a C-terminal arginine or lysine residue.. In terms of biological role, protease with a carboxypeptidase B-like function involved in the C-terminal processing of the lysine and arginine residues from protein precursors. Promotes cell fusion and is involved in the programmed cell death. This is Pheromone-processing carboxypeptidase KEX1 (KEX1) from Yarrowia lipolytica (strain CLIB 122 / E 150) (Yeast).